The primary structure comprises 634 residues: Glutamate--tRNA ligase (634 aa).

The 'HIGH' region signature appears at 108–118; that stretch reads PNPSGPLHIGH.

Belongs to the class-I aminoacyl-tRNA synthetase family. Glutamate--tRNA ligase type 2 subfamily.

The protein localises to the cytoplasm. It carries out the reaction tRNA(Glu) + L-glutamate + ATP = L-glutamyl-tRNA(Glu) + AMP + diphosphate. Its function is as follows. Catalyzes the attachment of glutamate to tRNA(Glu) in a two-step reaction: glutamate is first activated by ATP to form Glu-AMP and then transferred to the acceptor end of tRNA(Glu). The polypeptide is Glutamate--tRNA ligase (Methanoregula boonei (strain DSM 21154 / JCM 14090 / 6A8)).